The following is a 274-amino-acid chain: Diaminopimelate epimerase (274 aa).

Asn-11 and Asn-62 together coordinate substrate. Residue Cys-71 is the Proton donor of the active site. Residues 72 to 73, Asn-157, Asn-190, and 208 to 209 contribute to the substrate site; these read GN and ER. Cys-217 functions as the Proton acceptor in the catalytic mechanism. 218–219 contacts substrate; the sequence is GT.

It belongs to the diaminopimelate epimerase family. As to quaternary structure, homodimer.

The protein localises to the cytoplasm. It carries out the reaction (2S,6S)-2,6-diaminopimelate = meso-2,6-diaminopimelate. The protein operates within amino-acid biosynthesis; L-lysine biosynthesis via DAP pathway; DL-2,6-diaminopimelate from LL-2,6-diaminopimelate: step 1/1. Catalyzes the stereoinversion of LL-2,6-diaminopimelate (L,L-DAP) to meso-diaminopimelate (meso-DAP), a precursor of L-lysine and an essential component of the bacterial peptidoglycan. The chain is Diaminopimelate epimerase from Elusimicrobium minutum (strain Pei191).